A 172-amino-acid chain; its full sequence is MSSSRARQSFATECENAINKQINVELQAAYDYMAFFTYFDRDDVSFPKAAEFFRKASHEEREHAEKLAKYQNKRVGRVQYSDINGPTKTEFSSLEDAMNTALGMEKAVSKSLLELHEVASKNNDPALADFIESEFLHEQEDAIKQFADYLTETQRVGKGLGEYLFDKLTLNE.

The Ferritin-like diiron domain maps to 8–157; sequence QSFATECENA…DYLTETQRVG (150 aa). Fe cation is bound by residues Glu-25, Glu-60, His-63, Glu-105, and Gln-139.

It belongs to the ferritin family. In terms of assembly, oligomer of 24 subunits. The functional molecule forms a roughly spherical shell with a diameter of 12 nm and contains a central cavity into which the insoluble mineral iron core is deposited.

It carries out the reaction 4 Fe(2+) + O2 + 4 H(+) = 4 Fe(3+) + 2 H2O. Its function is as follows. Stores iron in a soluble, non-toxic, readily available form. Important for iron homeostasis. Has ferroxidase activity. Iron is taken up in the ferrous form and deposited as ferric hydroxides after oxidation. The polypeptide is Ferritin-2 heavy chain (SCM-2) (Schistosoma mansoni (Blood fluke)).